A 358-amino-acid polypeptide reads, in one-letter code: Phosphoribosylformylglycinamidine cyclo-ligase (358 aa).

It belongs to the AIR synthase family.

The protein localises to the cytoplasm. It catalyses the reaction 2-formamido-N(1)-(5-O-phospho-beta-D-ribosyl)acetamidine + ATP = 5-amino-1-(5-phospho-beta-D-ribosyl)imidazole + ADP + phosphate + H(+). It participates in purine metabolism; IMP biosynthesis via de novo pathway; 5-amino-1-(5-phospho-D-ribosyl)imidazole from N(2)-formyl-N(1)-(5-phospho-D-ribosyl)glycinamide: step 2/2. In Nitrosococcus oceani (strain ATCC 19707 / BCRC 17464 / JCM 30415 / NCIMB 11848 / C-107), this protein is Phosphoribosylformylglycinamidine cyclo-ligase.